Here is a 136-residue protein sequence, read N- to C-terminus: Small ribosomal subunit protein uS8c (136 aa).

This sequence belongs to the universal ribosomal protein uS8 family. As to quaternary structure, part of the 30S ribosomal subunit.

It localises to the plastid. It is found in the chloroplast. One of the primary rRNA binding proteins, it binds directly to 16S rRNA central domain where it helps coordinate assembly of the platform of the 30S subunit. The polypeptide is Small ribosomal subunit protein uS8c (rps8) (Citrus sinensis (Sweet orange)).